A 255-amino-acid chain; its full sequence is Urease accessory protein UreD 1 (255 aa).

It belongs to the UreD family. UreD, UreF and UreG form a complex that acts as a GTP-hydrolysis-dependent molecular chaperone, activating the urease apoprotein by helping to assemble the nickel containing metallocenter of UreC. The UreE protein probably delivers the nickel.

It is found in the cytoplasm. In terms of biological role, required for maturation of urease via the functional incorporation of the urease nickel metallocenter. In Saccharopolyspora erythraea (strain ATCC 11635 / DSM 40517 / JCM 4748 / NBRC 13426 / NCIMB 8594 / NRRL 2338), this protein is Urease accessory protein UreD 1.